Here is a 138-residue protein sequence, read N- to C-terminus: Acidic phospholipase A2 CH-E6' (138 aa).

The signal sequence occupies residues 1 to 16; the sequence is MRTLWIVAVLLLGVEG. Disulfide bonds link Cys-42/Cys-131, Cys-44/Cys-60, Cys-59/Cys-111, Cys-65/Cys-138, Cys-66/Cys-104, Cys-73/Cys-97, and Cys-91/Cys-102. Positions 43, 45, and 47 each coordinate Ca(2+). His-63 is a catalytic residue. Position 64 (Asp-64) interacts with Ca(2+). Asp-105 is a catalytic residue.

Belongs to the phospholipase A2 family. Group II subfamily. D49 sub-subfamily. Ca(2+) is required as a cofactor. In terms of tissue distribution, expressed by the venom gland.

The protein resides in the secreted. The catalysed reaction is a 1,2-diacyl-sn-glycero-3-phosphocholine + H2O = a 1-acyl-sn-glycero-3-phosphocholine + a fatty acid + H(+). Functionally, snake venom phospholipase A2 (PLA2) that shows high lipolytic and weak ADP-induced platelet aggregation activities. Also shows weak anticoagulant activity. PLA2 catalyzes the calcium-dependent hydrolysis of the 2-acyl groups in 3-sn-phosphoglycerides. The sequence is that of Acidic phospholipase A2 CH-E6' from Crotalus horridus (Timber rattlesnake).